The sequence spans 474 residues: Mitochondrial import inner membrane translocase subunit TIM44-1 (474 aa).

A mitochondrion-targeting transit peptide spans 1 to 54; that stretch reads MAIRKIIRDLLITKQPLLRQLFHQRVLRANARSEFLPAIGYTSHRRFSVFTEFS. Positions 68 to 88 form a coiled coil; sequence ERTVKELKERTEEFKGVTEDL. Residues 132–143 are compositionally biased toward basic and acidic residues; it reads VKESFKLGKEEN. The segment at 132–165 is disordered; that stretch reads VKESFKLGKEENAESASSSGTRASQGEKQQSGST. Over residues 145 to 165 the composition is skewed to polar residues; the sequence is ESASSSGTRASQGEKQQSGST.

The protein belongs to the Tim44 family. As to quaternary structure, probable component of the PAM complex at least composed of a mitochondrial HSP70 protein, TIMM44 and TIMM14. The complex interacts with the TIMM23 component of the TIM17:23 complex. As to expression, expressed in roots, flowers, young cotyledons and leaves.

Its subcellular location is the mitochondrion inner membrane. Its function is as follows. Essential component of the PAM complex, a complex required for the translocation of transit peptide-containing proteins from the inner membrane into the mitochondrial matrix in an ATP-dependent manner. Recruits mitochondrial HSP70 to drive protein translocation into the matrix using ATP as an energy source. The chain is Mitochondrial import inner membrane translocase subunit TIM44-1 (TIM44-1) from Arabidopsis thaliana (Mouse-ear cress).